A 154-amino-acid chain; its full sequence is RING finger protein 11 (154 aa).

Positions 1-12 are enriched in polar residues; sequence MGNCLKSPTSDD. Positions 1–53 are disordered; the sequence is MGNCLKSPTSDDISLLHESQSDRASFGEGTEPDQEPPPPYQEQVPVPVYHPTP. Glycine 2 is lipidated: N-myristoyl glycine. The S-palmitoyl cysteine moiety is linked to residue cysteine 4. Phosphoserine is present on residues serine 14 and serine 25. The PPxY motif motif lies at 37–40; it reads PPPY. Residues 41-51 show a composition bias toward low complexity; it reads QEQVPVPVYHP. The segment at 99-140 adopts an RING-type zinc-finger fold; sequence CVICMMDFVYGDPIRFLPCMHIYHLDCIDDWLMRSFTCPSCM. Threonine 135 is subject to Phosphothreonine; by PKB/AKT1.

In terms of assembly, interacts (when phosphorylated) with 14-3-3. Interacts with the E3 ubiquitin-ligases NEDD4, ITCH, SMURF2 and WWP1. Also interacts with the E2 ubiquitin-conjugating enzymes UBE2D1 and UBE2N, but neither with CDC34, nor with UBE2L3. Interacts with ZNF350, EPS15 and STAMBP. After TNF stimulation, interacts with TAX1BP1, TNFAIP3 and RIPK1; these interactions are transient and they are lost after 1 hour of stimulation with TNF. Interacts with GGA1. Post-translationally, ubiquitinated in the presence of ITCH, SMURF2 and UBE2D1, as well as WWP1. Phosphorylation by PKB/AKT1 may accelerate degradation by the proteasome. In terms of processing, acylation at both Gly-2 and Cys-4 is required for proper localization to the endosomes.

It localises to the early endosome. The protein resides in the recycling endosome. The protein localises to the cytoplasm. It is found in the nucleus. Functionally, essential component of a ubiquitin-editing protein complex, comprising also TNFAIP3, ITCH and TAX1BP1, that ensures the transient nature of inflammatory signaling pathways. Promotes the association of TNFAIP3 to RIPK1 after TNF stimulation. TNFAIP3 deubiquitinates 'Lys-63' polyubiquitin chains on RIPK1 and catalyzes the formation of 'Lys-48'-polyubiquitin chains. This leads to RIPK1 proteasomal degradation and consequently termination of the TNF- or LPS-mediated activation of NF-kappa-B. Recruits STAMBP to the E3 ubiquitin-ligase SMURF2 for ubiquitination, leading to its degradation by the 26S proteasome. This Bos taurus (Bovine) protein is RING finger protein 11 (RNF11).